The chain runs to 176 residues: Cytochrome c oxidase subunit 4 isoform 2, mitochondrial (176 aa).

A mitochondrion-targeting transit peptide spans 1 to 28 (MLRLTAGRVRSLLAGRATAAFSTSSARM). Residues 29–106 (ASHDLEVAES…TYSEMKQPSS (78 aa)) lie on the Mitochondrial matrix side of the membrane. A helical membrane pass occupies residues 107–132 (EWKTVFGGIFIFLGFTGLVVWWQALY). The Mitochondrial intermembrane portion of the chain corresponds to 133–176 (VYPPRPRTFDDEWKAKQLKRMLDMRVNPIEGFSAKWDYEKGQWK).

The protein belongs to the cytochrome c oxidase IV family. As to quaternary structure, component of the cytochrome c oxidase (complex IV, CIV), a multisubunit enzyme composed of 14 subunits. The complex is composed of a catalytic core of 3 subunits MT-CO1, MT-CO2 and MT-CO3, encoded in the mitochondrial DNA, and 11 supernumerary subunits COX4I, COX5A, COX5B, COX6A, COX6B, COX6C, COX7A, COX7B, COX7C, COX8 and NDUFA4, which are encoded in the nuclear genome. The complex exists as a monomer or a dimer and forms supercomplexes (SCs) in the inner mitochondrial membrane with NADH-ubiquinone oxidoreductase (complex I, CI) and ubiquinol-cytochrome c oxidoreductase (cytochrome b-c1 complex, complex III, CIII), resulting in different assemblies (supercomplex SCI(1)III(2)IV(1) and megacomplex MCI(2)III(2)IV(2)).

The protein localises to the mitochondrion inner membrane. Its pathway is energy metabolism; oxidative phosphorylation. Its function is as follows. Component of the cytochrome c oxidase, the last enzyme in the mitochondrial electron transport chain which drives oxidative phosphorylation. The respiratory chain contains 3 multisubunit complexes succinate dehydrogenase (complex II, CII), ubiquinol-cytochrome c oxidoreductase (cytochrome b-c1 complex, complex III, CIII) and cytochrome c oxidase (complex IV, CIV), that cooperate to transfer electrons derived from NADH and succinate to molecular oxygen, creating an electrochemical gradient over the inner membrane that drives transmembrane transport and the ATP synthase. Cytochrome c oxidase is the component of the respiratory chain that catalyzes the reduction of oxygen to water. Electrons originating from reduced cytochrome c in the intermembrane space (IMS) are transferred via the dinuclear copper A center (CU(A)) of subunit 2 and heme A of subunit 1 to the active site in subunit 1, a binuclear center (BNC) formed by heme A3 and copper B (CU(B)). The BNC reduces molecular oxygen to 2 water molecules using 4 electrons from cytochrome c in the IMS and 4 protons from the mitochondrial matrix. In Thunnus obesus (Bigeye tuna), this protein is Cytochrome c oxidase subunit 4 isoform 2, mitochondrial.